A 483-amino-acid chain; its full sequence is NADH-quinone oxidoreductase subunit N (483 aa).

13 helical membrane-spanning segments follow: residues 9-29, 35-55, 69-89, 104-124, 158-178, 201-221, 234-254, 272-292, 297-317, 325-345, 368-388, 404-424, and 449-469; these read LVLPEVILGVSALVLLVWGAF, PLFTGAAVLALLGAAVAAVVG, AAATYAKVAIYLSSAVAIVLG, AVLVILAAVGMGVTASAGDLI, FVLGALSSGLLLYGASLIYGF, VGLLFGLVFLICGLAFKVSAA, APTSVVGFFAAAPKLAAMMMF, VLIIASLASVFVGAFAGLAQT, LWAYSSIANVGYALLGVATGG, LLFMTLYMVDVTGFFACLQAL, IAVAMTAFSLSALGMPPFSGF, VLLQWAAVLGLVGSVVAAFYY, and AVGFAAALFSFPVVMVALIWL.

This sequence belongs to the complex I subunit 2 family. NDH-1 is composed of 14 different subunits. Subunits NuoA, H, J, K, L, M, N constitute the membrane sector of the complex.

The protein localises to the cell inner membrane. It catalyses the reaction a quinone + NADH + 5 H(+)(in) = a quinol + NAD(+) + 4 H(+)(out). Functionally, NDH-1 shuttles electrons from NADH, via FMN and iron-sulfur (Fe-S) centers, to quinones in the respiratory chain. The immediate electron acceptor for the enzyme in this species is believed to be ubiquinone. Couples the redox reaction to proton translocation (for every two electrons transferred, four hydrogen ions are translocated across the cytoplasmic membrane), and thus conserves the redox energy in a proton gradient. The sequence is that of NADH-quinone oxidoreductase subunit N from Caulobacter sp. (strain K31).